Consider the following 658-residue polypeptide: DNA mismatch repair protein MutL (658 aa).

Positions 114-130 are enriched in basic and acidic residues; it reads RQEDSSHATQVKAEDGK. 2 disordered regions span residues 114–138 and 355–405; these read RQED…TAAA and PSEN…HSLS.

The protein belongs to the DNA mismatch repair MutL/HexB family.

Its function is as follows. This protein is involved in the repair of mismatches in DNA. It is required for dam-dependent methyl-directed DNA mismatch repair. May act as a 'molecular matchmaker', a protein that promotes the formation of a stable complex between two or more DNA-binding proteins in an ATP-dependent manner without itself being part of a final effector complex. This chain is DNA mismatch repair protein MutL, found in Neisseria gonorrhoeae (strain ATCC 700825 / FA 1090).